The chain runs to 365 residues: tRNA 2-selenouridine synthase (365 aa).

One can recognise a Rhodanese domain in the interval 15–138 (LVNDHPIMDA…MRQFLIETID (124 aa)). C98 serves as the catalytic S-selanylcysteine intermediate.

This sequence belongs to the SelU family. In terms of assembly, monomer.

It carries out the reaction 5-methylaminomethyl-2-thiouridine(34) in tRNA + selenophosphate + (2E)-geranyl diphosphate + H2O + H(+) = 5-methylaminomethyl-2-selenouridine(34) in tRNA + (2E)-thiogeraniol + phosphate + diphosphate. It catalyses the reaction 5-methylaminomethyl-2-thiouridine(34) in tRNA + (2E)-geranyl diphosphate = 5-methylaminomethyl-S-(2E)-geranyl-thiouridine(34) in tRNA + diphosphate. The catalysed reaction is 5-methylaminomethyl-S-(2E)-geranyl-thiouridine(34) in tRNA + selenophosphate + H(+) = 5-methylaminomethyl-2-(Se-phospho)selenouridine(34) in tRNA + (2E)-thiogeraniol. The enzyme catalyses 5-methylaminomethyl-2-(Se-phospho)selenouridine(34) in tRNA + H2O = 5-methylaminomethyl-2-selenouridine(34) in tRNA + phosphate. Functionally, involved in the post-transcriptional modification of the uridine at the wobble position (U34) of tRNA(Lys), tRNA(Glu) and tRNA(Gln). Catalyzes the conversion of 2-thiouridine (S2U-RNA) to 2-selenouridine (Se2U-RNA). Acts in a two-step process involving geranylation of 2-thiouridine (S2U) to S-geranyl-2-thiouridine (geS2U) and subsequent selenation of the latter derivative to 2-selenouridine (Se2U) in the tRNA chain. In Shewanella pealeana (strain ATCC 700345 / ANG-SQ1), this protein is tRNA 2-selenouridine synthase.